Reading from the N-terminus, the 412-residue chain is Double C2-like domain-containing protein beta (412 aa).

Residues 1 to 36 (MTLRRRGEKATISIQEHMAIDVCPGPIRPIKQISDY) are negatively regulates targeting to plasma membrane. The tract at residues 1–90 (MTLRRRGEKA…EDVDQLFGAY (90 aa)) is mediates interaction with DYNLT1. Positions 38–123 (PRFPRGLPPT…PDADGYESDD (86 aa)) are disordered. The segment covering 49–73 (APRASAPPDAPARSPAATAGPRSPS) has biased composition (low complexity). Residues 95–108 (GPSPGPSPVRPPAK) are compositionally biased toward pro residues. Acidic residues predominate over residues 112-123 (DEPDADGYESDD). 2 consecutive C2 domains span residues 126–250 (ALGT…SICL) and 266–399 (ERGR…ERWH). Residues Asp157, Asp163, Asp218, Asp220, Asp297, Asp303, Asp357, Asp359, and Asp365 each coordinate Ca(2+). The interval 257–375 (DKAEDKSLEE…FIGGVVLGIN (119 aa)) is mediates interaction with STXBP3. Residue Ser411 is modified to Phosphoserine.

In terms of assembly, interacts with STX4; the interaction is calcium-dependent, increased by insulin and glucose, and mediates vesicle fusion with plasma membrane in pancreatic cells and adipocytes. Interacts with STXBP3; the interaction is direct, occurs at the cell membrane and regulates glucose-stimulated insulin secretion. Interacts with cytoplasmic dynein light chain DYNLT1. Interacts with the SNARE (soluble N-ethylmaleimide-sensitive factor attached protein receptor) complex composed of SNAP25, STX1A and VAMP2; the interaction is calcium-dependent and competitive with SYT1. May interact with UNC13A; the interaction mediates targeting to the plasma membrane. The cofactor is Ca(2+). In terms of tissue distribution, expressed in brain; highly enriched in neurons.

The protein localises to the cytoplasm. It is found in the cytoplasmic granule. The protein resides in the cell membrane. In terms of biological role, calcium sensor which positively regulates SNARE-dependent fusion of vesicles with membranes. Binds phospholipids in a calcium-dependent manner and may act at the priming stage of fusion by modifying membrane curvature to stimulate fusion. Involved in calcium-triggered exocytosis in chromaffin cells and calcium-dependent spontaneous release of neurotransmitter in absence of action potentials in neuronal cells. Involved both in glucose-stimulated insulin secretion in pancreatic cells and insulin-dependent GLUT4 transport to the plasma membrane in adipocytes. The chain is Double C2-like domain-containing protein beta (Doc2b) from Rattus norvegicus (Rat).